The following is a 117-amino-acid chain: CUE domain-containing protein CUE4 (117 aa).

The disordered stretch occupies residues 27–74 (QVPSRTVQDAKPAPSVATNDPSPEPVPSAPEERVARLNRHGSDRKRAV). Lysine 37 is covalently cross-linked (Glycyl lysine isopeptide (Lys-Gly) (interchain with G-Cter in ubiquitin)). Phosphoserine is present on serine 48. Over residues 56 to 74 (PEERVARLNRHGSDRKRAV) the composition is skewed to basic and acidic residues. Positions 74-116 (VNSDMVEIVMTMAPHVPQEKVVQDLRNTGSIEHTMENIFAGKL) constitute a CUE domain.

Ubiquitinated.

The protein resides in the cytoplasm. Its subcellular location is the endoplasmic reticulum. The chain is CUE domain-containing protein CUE4 (CUE4) from Saccharomyces cerevisiae (strain ATCC 204508 / S288c) (Baker's yeast).